The primary structure comprises 146 residues: Ribosome-binding factor A (146 aa).

A disordered region spans residues 125–146 (RDLDADDDKTKDDRAKDDKDSE).

This sequence belongs to the RbfA family. In terms of assembly, monomer. Binds 30S ribosomal subunits, but not 50S ribosomal subunits or 70S ribosomes.

The protein resides in the cytoplasm. Its function is as follows. One of several proteins that assist in the late maturation steps of the functional core of the 30S ribosomal subunit. Associates with free 30S ribosomal subunits (but not with 30S subunits that are part of 70S ribosomes or polysomes). Required for efficient processing of 16S rRNA. May interact with the 5'-terminal helix region of 16S rRNA. This is Ribosome-binding factor A from Mesorhizobium japonicum (strain LMG 29417 / CECT 9101 / MAFF 303099) (Mesorhizobium loti (strain MAFF 303099)).